The following is a 956-amino-acid chain: Run domain Beclin-1-interacting and cysteine-rich domain-containing protein (956 aa).

The region spanning 49–190 (WSKYGGLERL…PRLLAQIDAS (142 aa)) is the RUN domain. An interaction with PIK3C3 region spans residues 50 to 181 (SKYGGLERLC…CLEAVEQNNP (132 aa)). S198 is subject to Phosphoserine. Residues 205-437 (SQSLTALPGS…ITIIVEDPIA (233 aa)) form an interaction with YWHAB region. Over residues 233 to 242 (SLQSMPQSSH) the composition is skewed to low complexity. Residues 233–423 (SLQSMPQSSH…TNIASRGAAG (191 aa)) form a disordered region. A phosphoserine mark is found at S250 and S268. Residues 270–319 (AETQTTPAPLPSDSTLAQDSPLTAQEMSDSTLTSPLEASWVSSQNDSPSD) are compositionally biased toward polar residues. Residues 302–585 (TSPLEASWVS…DLEIQDADIR (284 aa)) are interaction with UVRAG. The segment covering 339-371 (ASCESHSSNGESSSSHLFSSSSSQKLESAASSL) has biased composition (low complexity). Over residues 379 to 395 (QSQAGSVLRRSSFSEGQ) the composition is skewed to polar residues. Phosphoserine occurs at positions 390, 412, 513, and 547. Residues 490–542 (AIELMKCNMMSQCLEEEEVEEEDSDREIQELKQKIRLRRQQIRTKNLLPAYRE) form an interaction with BECN1 region. A compositionally biased stretch (low complexity) spans 547–566 (SFRVTSSSSQFSSRDSTQLS). Residues 547–579 (SFRVTSSSSQFSSRDSTQLSESGSAEDADDLEI) are disordered. The segment at 552-609 (SSSSQFSSRDSTQLSESGSAEDADDLEIQDADIRRSAVSNGKSSFSQNLSHCFLHSTS) is interaction with CYBA. A compositionally biased stretch (acidic residues) spans 570-579 (SAEDADDLEI). S655 bears the Phosphoserine mark. Positions 656–744 (PDDGQHADIY…HENAQMVVPS (89 aa)) are interaction with CARD9. The tract at residues 705 to 956 (CAGCGIRTDP…ALEATVLETT (252 aa)) is interaction with Rab7.

Associates with PI3K (PI3KC3/PI3K-III/class III phosphatidylinositol 3-kinase) complex II (PI3KC3-C2) in which the core composed of the catalytic subunit PIK3C3, the regulatory subunit PIK3R4 and BECN1 is associated with UVRAG; in the complex interacts directly with PI3KC3 and UVRAG. Interacts with Rab7 (RAB7A or RAB7B) (GTP-bound form); Rab7 and UVRAG compete for RUBCN binding; can interact simultaneously with Rab7 and the PI3K complex. Interacts with CYBA and CYBB; indicative for the association with the CYBA:CYBB NADPH oxidase heterodimer. Interacts with NOX4 and probably associates with the CYBA:NOX4 complex. Interacts with YWHAB and CARD9 in a competitive and stimulation-dependent manner; RUBCN exchanges interaction from YWHAB to CARD9 upon stimulation with beta-1,3-glucan.

It is found in the late endosome. The protein resides in the lysosome. The protein localises to the early endosome. Its function is as follows. Inhibits PIK3C3 activity; under basal conditions negatively regulates PI3K complex II (PI3KC3-C2) function in autophagy. Negatively regulates endosome maturation and degradative endocytic trafficking and impairs autophagosome maturation process. Can sequester UVRAG from association with a class C Vps complex (possibly the HOPS complex) and negatively regulates Rab7 activation. Functionally, involved in regulation of pathogen-specific host defense of activated macrophages. Following bacterial infection promotes NADH oxidase activity by association with CYBA thereby affecting TLR2 signaling and probably other TLR-NOX pathways. Stabilizes the CYBA:CYBB NADPH oxidase heterodimer, increases its association with TLR2 and its phagosome trafficking to induce antimicrobial burst of ROS and production of inflammatory cytokines. Following fungal or viral infection (implicating CLEC7A (dectin-1)-mediated myeloid cell activation or RIGI-dependent sensing of RNA viruses) negatively regulates pro-inflammatory cytokine production by association with CARD9 and sequestering it from signaling complexes. The sequence is that of Run domain Beclin-1-interacting and cysteine-rich domain-containing protein from Mus musculus (Mouse).